We begin with the raw amino-acid sequence, 389 residues long: Pyruvylated Gal-beta-1,3-epitope synthesis protein 2 (389 aa).

Topologically, residues 1–16 (MTKLWVNFFSQKLLRL) are cytoplasmic. A helical membrane pass occupies residues 17–37 (LIPSIIVVFAFAALFAIYSPI). Residues 38-389 (QLGGINFYKR…WSNSFDLITA (352 aa)) lie on the Lumenal side of the membrane.

The protein resides in the endoplasmic reticulum membrane. It is found in the golgi apparatus membrane. In terms of biological role, involved in cell wall biogenesis. Has a role in the addition of Gal-beta1,3 moeities to galactomannans and their subsequent pyruvylation. Has a role in meiosis. This is Pyruvylated Gal-beta-1,3-epitope synthesis protein 2 (pvg2) from Schizosaccharomyces pombe (strain 972 / ATCC 24843) (Fission yeast).